We begin with the raw amino-acid sequence, 327 residues long: Ribonucleoside-diphosphate reductase small chain (327 aa).

Positions 70, 101, and 104 each coordinate Fe cation. Residue tyrosine 108 is part of the active site. Residues glutamate 164, glutamate 198, and histidine 201 each contribute to the Fe cation site.

Belongs to the ribonucleoside diphosphate reductase small chain family. In terms of assembly, heterotetramer composed of a homodimer of the large subunit (R1) and a homodimer of the small subunit (R2). Larger multisubunit protein complex are also active, composed of (R1)n(R2)n. It depends on Fe cation as a cofactor.

The catalysed reaction is a 2'-deoxyribonucleoside 5'-diphosphate + [thioredoxin]-disulfide + H2O = a ribonucleoside 5'-diphosphate + [thioredoxin]-dithiol. Functionally, ribonucleoside-diphosphate reductase holoenzyme provides the precursors necessary for viral DNA synthesis. Allows virus growth in non-dividing cells. Catalyzes the biosynthesis of deoxyribonucleotides from the corresponding ribonucleotides. This Ornithodoros (relapsing fever ticks) protein is Ribonucleoside-diphosphate reductase small chain.